The following is a 135-amino-acid chain: ATP synthase epsilon chain (135 aa).

A disordered region spans residues 84–107 (SLSEEKQSEEQKQRLERAKKALSS). Basic and acidic residues predominate over residues 86–102 (SEEKQSEEQKQRLERAK).

This sequence belongs to the ATPase epsilon chain family. As to quaternary structure, F-type ATPases have 2 components, CF(1) - the catalytic core - and CF(0) - the membrane proton channel. CF(1) has five subunits: alpha(3), beta(3), gamma(1), delta(1), epsilon(1). CF(0) has three main subunits: a, b and c.

Its subcellular location is the cell membrane. Produces ATP from ADP in the presence of a proton gradient across the membrane. The chain is ATP synthase epsilon chain from Elusimicrobium minutum (strain Pei191).